Here is a 513-residue protein sequence, read N- to C-terminus: ATP synthase subunit beta (513 aa).

The disordered stretch occupies residues 1 to 29 (MATAPATEKKAPAKKAAAPKAAAPKKAAA). Over residues 14-29 (KKAAAPKAAAPKKAAA) the composition is skewed to low complexity. Residue 186-193 (GGAGVGKT) participates in ATP binding.

It belongs to the ATPase alpha/beta chains family. In terms of assembly, F-type ATPases have 2 components, CF(1) - the catalytic core - and CF(0) - the membrane proton channel. CF(1) has five subunits: alpha(3), beta(3), gamma(1), delta(1), epsilon(1). CF(0) has three main subunits: a(1), b(2) and c(9-12). The alpha and beta chains form an alternating ring which encloses part of the gamma chain. CF(1) is attached to CF(0) by a central stalk formed by the gamma and epsilon chains, while a peripheral stalk is formed by the delta and b chains.

The protein localises to the cell inner membrane. It catalyses the reaction ATP + H2O + 4 H(+)(in) = ADP + phosphate + 5 H(+)(out). Produces ATP from ADP in the presence of a proton gradient across the membrane. The catalytic sites are hosted primarily by the beta subunits. This is ATP synthase subunit beta from Sphingopyxis alaskensis (strain DSM 13593 / LMG 18877 / RB2256) (Sphingomonas alaskensis).